The chain runs to 184 residues: Translation initiation factor IF-3 (184 aa).

The protein belongs to the IF-3 family. As to quaternary structure, monomer.

It is found in the cytoplasm. Functionally, IF-3 binds to the 30S ribosomal subunit and shifts the equilibrium between 70S ribosomes and their 50S and 30S subunits in favor of the free subunits, thus enhancing the availability of 30S subunits on which protein synthesis initiation begins. This is Translation initiation factor IF-3 from Mycoplasma genitalium (strain ATCC 33530 / DSM 19775 / NCTC 10195 / G37) (Mycoplasmoides genitalium).